A 110-amino-acid chain; its full sequence is MNNLKLDIVEQDDKAIVRVQGDIDAYNSSELKEQLRNFISTTSKKKIVLDLSSVSYMDSAGLGTLVVILKDAKINGKEFILSSLKESISRILKLTHLDKIFKITDTVEEA.

One can recognise an STAS domain in the interval 4 to 110 (LKLDIVEQDD…FKITDTVEEA (107 aa)). Ser-59 is modified (phosphoserine).

This sequence belongs to the anti-sigma-factor antagonist family. In terms of processing, phosphorylated on a serine residue.

Functionally, in the phosphorylated form it could act as an anti-anti-sigma factor that counteracts an anti-sigma factor and thus releases a sigma factor from inhibition. The protein is Putative anti-sigma factor antagonist TM_1442 of Thermotoga maritima (strain ATCC 43589 / DSM 3109 / JCM 10099 / NBRC 100826 / MSB8).